A 219-amino-acid polypeptide reads, in one-letter code: Probable transcriptional regulator flp (219 aa).

An HTH crp-type domain is found at 144 to 212; that stretch reads DSINVRLTHY…GKQVRILNAE (69 aa). Positions 191-210 form a DNA-binding region, H-T-H motif; that stretch reads KRLAEEKLIERSGKQVRILN.

In Lacticaseibacillus casei (Lactobacillus casei), this protein is Probable transcriptional regulator flp (flp).